A 170-amino-acid chain; its full sequence is Transmembrane protein 252 (170 aa).

Helical transmembrane passes span Ile8–Ile28 and Leu40–Trp60. Residues Cys112–Tyr147 form a disordered region.

The protein resides in the membrane. This Pongo abelii (Sumatran orangutan) protein is Transmembrane protein 252 (TMEM252).